We begin with the raw amino-acid sequence, 133 residues long: Antifungal protein ginkbilobin-like protein 1 (133 aa).

A signal peptide spans 1–24 (MSMGSFGFALAVMVLAVLVASAAG). The Gnk2-homologous domain occupies 28–133 (TNFVSSACNT…CFIRYEQYSI (106 aa)). Cystine bridges form between Cys-35–Cys-111, Cys-87–Cys-96, and Cys-99–Cys-124. Residue Asn-36 participates in alpha-D-mannopyranose binding. 2 residues coordinate alpha-D-mannopyranose: Arg-118 and Glu-129.

Functionally, exerts antifungal activity through its carbohydrate-binding specificity. In Picea sitchensis (Sitka spruce), this protein is Antifungal protein ginkbilobin-like protein 1.